The primary structure comprises 269 residues: tRNA pseudouridine synthase A (269 aa).

Residue Asp-51 is the Nucleophile of the active site. Tyr-109 provides a ligand contact to substrate.

Belongs to the tRNA pseudouridine synthase TruA family. Homodimer.

The enzyme catalyses uridine(38/39/40) in tRNA = pseudouridine(38/39/40) in tRNA. Its function is as follows. Formation of pseudouridine at positions 38, 39 and 40 in the anticodon stem and loop of transfer RNAs. The polypeptide is tRNA pseudouridine synthase A (Aeromonas hydrophila subsp. hydrophila (strain ATCC 7966 / DSM 30187 / BCRC 13018 / CCUG 14551 / JCM 1027 / KCTC 2358 / NCIMB 9240 / NCTC 8049)).